We begin with the raw amino-acid sequence, 117 residues long: Large ribosomal subunit protein uL22 (117 aa).

It belongs to the universal ribosomal protein uL22 family. In terms of assembly, part of the 50S ribosomal subunit.

This protein binds specifically to 23S rRNA; its binding is stimulated by other ribosomal proteins, e.g. L4, L17, and L20. It is important during the early stages of 50S assembly. It makes multiple contacts with different domains of the 23S rRNA in the assembled 50S subunit and ribosome. Its function is as follows. The globular domain of the protein is located near the polypeptide exit tunnel on the outside of the subunit, while an extended beta-hairpin is found that lines the wall of the exit tunnel in the center of the 70S ribosome. This chain is Large ribosomal subunit protein uL22, found in Staphylococcus aureus (strain USA300).